The chain runs to 206 residues: Tektin bundle-interacting protein 1 (206 aa).

In terms of assembly, microtubule inner protein component of sperm flagellar doublet microtubules.

Its subcellular location is the cytoplasm. The protein localises to the cytoskeleton. It is found in the cilium axoneme. The protein resides in the flagellum axoneme. Microtubule inner protein (MIP) part of the dynein-decorated doublet microtubules (DMTs) in cilia axoneme, which is required for motile cilia beating. Located at the center of the tektin bundle where may function to recruit tektins or stabilize the bundle. The protein is Tektin bundle-interacting protein 1 of Mus musculus (Mouse).